A 599-amino-acid polypeptide reads, in one-letter code: ATP-dependent rRNA helicase SPB4 (599 aa).

Positions 7-35 (WDTLDYTLQPWIRTAVDAMGYETMTPVQA) match the Q motif motif. Residues 38 to 224 (IPLFARNKDV…KTGMRNPVKV (187 aa)) form the Helicase ATP-binding domain. 51–58 (SVTGSGKT) lines the ATP pocket. Positions 172-175 (DEAD) match the DEAD box motif. Residues 248–415 (KLQLLLTLLN…GLPEIIRAWI (168 aa)) enclose the Helicase C-terminal domain. A coiled-coil region spans residues 501–561 (QREKARKLAK…LKRKAIEEKL (61 aa)). Residues 559-599 (EKLIENSDDSDNEVETDWKDIVRQRKKKKTNSGMQGDFGDL) are disordered. The segment covering 564 to 573 (NSDDSDNEVE) has biased composition (acidic residues).

Belongs to the DEAD box helicase family. DDX55/SPB4 subfamily. As to quaternary structure, component of pre-60S ribosomal complexes.

The protein localises to the nucleus. It localises to the nucleolus. It carries out the reaction ATP + H2O = ADP + phosphate + H(+). In terms of biological role, ATP-binding RNA helicase involved in the biogenesis of 60S ribosomal subunits. Binds 90S pre-ribosomal particles and dissociates from pre-60S ribosomal particles after processing of 27SB pre-rRNA. Required for the normal formation of 18S rRNA through the processing of pre-rRNAs at sites A0, A1 and A2, and the normal formation of 25S and 5.8S rRNAs through the processing of pre-rRNAs at sites C1 and C2. The protein is ATP-dependent rRNA helicase SPB4 of Eremothecium gossypii (strain ATCC 10895 / CBS 109.51 / FGSC 9923 / NRRL Y-1056) (Yeast).